A 181-amino-acid chain; its full sequence is Large ribosomal subunit protein uL10 (181 aa).

It belongs to the universal ribosomal protein uL10 family. In terms of assembly, part of the ribosomal stalk of the 50S ribosomal subunit. The N-terminus interacts with L11 and the large rRNA to form the base of the stalk. The C-terminus forms an elongated spine to which L12 dimers bind in a sequential fashion forming a multimeric L10(L12)X complex.

Forms part of the ribosomal stalk, playing a central role in the interaction of the ribosome with GTP-bound translation factors. The polypeptide is Large ribosomal subunit protein uL10 (Bradyrhizobium diazoefficiens (strain JCM 10833 / BCRC 13528 / IAM 13628 / NBRC 14792 / USDA 110)).